A 255-amino-acid chain; its full sequence is MKIGVFDSGVGGFSVLKSLLKAQIFDEIIYYGDSARVPYGTKDPTTIKQFGLEALDFFKPHQIKLLIVACNTASALALEEMQKHSKIPIVGVIEPSILAIKQQVKDKNAPILVLGTKATIQSNAYDNALKQQGYLNVSHLATSLFVPLIEESILEGELLETCMRYYFTPLEILPEVVILGCTHFPLIAQKIEGYFMEHFALSTPPLLIHSGDAIVGYLQQKYALKKNACAFPKVEFHASGDVVWLEKQAKEWLKL.

Substrate-binding positions include 7–8 (DS) and 39–40 (YG). C70 serves as the catalytic Proton donor/acceptor. A substrate-binding site is contributed by 71–72 (NT). C181 acts as the Proton donor/acceptor in catalysis. 182–183 (TH) contributes to the substrate binding site.

This sequence belongs to the aspartate/glutamate racemases family.

It carries out the reaction L-glutamate = D-glutamate. The protein operates within cell wall biogenesis; peptidoglycan biosynthesis. Its function is as follows. Provides the (R)-glutamate required for cell wall biosynthesis. The sequence is that of Glutamate racemase from Helicobacter pylori (strain HPAG1).